We begin with the raw amino-acid sequence, 345 residues long: Dihydroorotase (345 aa).

The Zn(2+) site is built by histidine 13 and histidine 15. Residues 15 to 17 and asparagine 41 contribute to the substrate site; that span reads HLR. Positions 99, 136, and 174 each coordinate Zn(2+). Lysine 99 is subject to N6-carboxylysine. Residue histidine 136 participates in substrate binding. Leucine 219 is a binding site for substrate. Residue aspartate 247 participates in Zn(2+) binding. Residue aspartate 247 is part of the active site. Substrate contacts are provided by histidine 251 and alanine 263.

This sequence belongs to the metallo-dependent hydrolases superfamily. DHOase family. Class II DHOase subfamily. Homodimer. Zn(2+) serves as cofactor.

The enzyme catalyses (S)-dihydroorotate + H2O = N-carbamoyl-L-aspartate + H(+). It participates in pyrimidine metabolism; UMP biosynthesis via de novo pathway; (S)-dihydroorotate from bicarbonate: step 3/3. Functionally, catalyzes the reversible cyclization of carbamoyl aspartate to dihydroorotate. This Hahella chejuensis (strain KCTC 2396) protein is Dihydroorotase.